A 70-amino-acid chain; its full sequence is Drosomycin (70 aa).

The first 20 residues, 1 to 20 (MMQIKYLFALFAVLMLVVLG), serve as a signal peptide directing secretion. The propeptide occupies 21 to 26 (ANEADA). 4 disulfides stabilise this stretch: cysteine 28–cysteine 70, cysteine 37–cysteine 59, cysteine 45–cysteine 65, and cysteine 49–cysteine 67. Asparagine 42 carries N-linked (GlcNAc...) asparagine glycosylation.

As to expression, hemolymph (at protein level). Synthesized in the fat body and is secreted into the blood. In larvae, expressed in the visceral branches and posterior spiracles of the trachea.

It localises to the secreted. Possesses antifungal activity and is active against a relatively broad spectrum of filamentous fungi. It inhibits spore germination at high concentrations and at low concentrations delays growth of hyphae which subsequently exhibit abnormal morphology. Spz C-106 in the hemolymph controls expression of the antifungal peptide by acting as a ligand of Tl and inducing an intracellular signaling pathway. Part of a psh-dependent Toll pathway, which may function in activating the systematic immune response in response to localized melanization of the tracheal system. This Drosophila melanogaster (Fruit fly) protein is Drosomycin (Drs).